A 512-amino-acid polypeptide reads, in one-letter code: Maturase K (512 aa).

Belongs to the intron maturase 2 family. MatK subfamily.

It is found in the plastid. It localises to the chloroplast. Usually encoded in the trnK tRNA gene intron. Probably assists in splicing its own and other chloroplast group II introns. The protein is Maturase K of Lilium henryi (Henry's lily).